The sequence spans 434 residues: Glutamyl-tRNA reductase (434 aa).

Substrate-binding positions include 49 to 52 (TCNR), serine 109, 114 to 116 (EPQ), and glutamine 120. The Nucleophile role is filled by cysteine 50. 189-194 (GAGEMC) lines the NADP(+) pocket.

Belongs to the glutamyl-tRNA reductase family. As to quaternary structure, homodimer.

It catalyses the reaction (S)-4-amino-5-oxopentanoate + tRNA(Glu) + NADP(+) = L-glutamyl-tRNA(Glu) + NADPH + H(+). It functions in the pathway porphyrin-containing compound metabolism; protoporphyrin-IX biosynthesis; 5-aminolevulinate from L-glutamyl-tRNA(Glu): step 1/2. In terms of biological role, catalyzes the NADPH-dependent reduction of glutamyl-tRNA(Glu) to glutamate 1-semialdehyde (GSA). The chain is Glutamyl-tRNA reductase from Geotalea daltonii (strain DSM 22248 / JCM 15807 / FRC-32) (Geobacter daltonii).